Here is a 266-residue protein sequence, read N- to C-terminus: 3-methyl-2-oxobutanoate hydroxymethyltransferase 2 (266 aa).

Residues aspartate 45 and aspartate 84 each coordinate Mg(2+). 3-methyl-2-oxobutanoate is bound by residues 45–46, aspartate 84, and lysine 112; that span reads DS. A Mg(2+)-binding site is contributed by glutamate 114. Residue glutamate 181 is the Proton acceptor of the active site.

This sequence belongs to the PanB family. In terms of assembly, homodecamer; pentamer of dimers. Mg(2+) is required as a cofactor.

It localises to the cytoplasm. The enzyme catalyses 3-methyl-2-oxobutanoate + (6R)-5,10-methylene-5,6,7,8-tetrahydrofolate + H2O = 2-dehydropantoate + (6S)-5,6,7,8-tetrahydrofolate. It participates in cofactor biosynthesis; (R)-pantothenate biosynthesis; (R)-pantoate from 3-methyl-2-oxobutanoate: step 1/2. Its function is as follows. Catalyzes the reversible reaction in which hydroxymethyl group from 5,10-methylenetetrahydrofolate is transferred onto alpha-ketoisovalerate to form ketopantoate. The protein is 3-methyl-2-oxobutanoate hydroxymethyltransferase 2 of Pseudomonas aeruginosa (strain UCBPP-PA14).